A 339-amino-acid chain; its full sequence is Trace amine-associated receptor 2 (339 aa).

Over 1–36 (MTSFEAQQETFDCSEYGNGSCPENERSLGVRAAMYS) the chain is Extracellular. N-linked (GlcNAc...) asparagine glycosylation occurs at asparagine 18. Cystine bridges form between cysteine 21–cysteine 185 and cysteine 104–cysteine 189. The chain crosses the membrane as a helical span at residues 37 to 57 (LMAGAIFITIFGNLVMIISIS). The Cytoplasmic segment spans residues 58–67 (YFKQLHTPTN). The helical transmembrane segment at 68-88 (LLILSMAVTDFLLGFTIMPYS) threads the bilayer. At 89-106 (MVRSVENCWYFGLTFCKI) the chain is on the extracellular side. A helical membrane pass occupies residues 107–127 (HYSFDLMLSITSIFHLCSVAI). Topologically, residues 128–150 (DRFYAICHPLHYCTKMTIPVVKR) are cytoplasmic. The chain crosses the membrane as a helical span at residues 151-171 (LLLVCWSVPGAFAFGVVFSEA). The Extracellular portion of the chain corresponds to 172 to 195 (YADGIEGYDILVACSSSCPVMFNK). A helical transmembrane segment spans residues 196-216 (LWGTTLFVAGFFTPSSMMVGI). The Cytoplasmic portion of the chain corresponds to 217–251 (YGKIFAVSKKHARVIDNLPENQNNQMRKDKKAAKT). Residues 252 to 272 (LGIVMGVFLLCWFPCFFTILL) form a helical membrane-spanning segment. Over 273–287 (DPFLNFSTPAILFDA) the chain is Extracellular. N-linked (GlcNAc...) asparagine glycosylation is present at asparagine 277. A helical membrane pass occupies residues 288–310 (LTWFGYFNSTCNPLIYGFFYPWF). The Cytoplasmic portion of the chain corresponds to 311 to 339 (RRALRYILLGKIFSSHFHNTNLFTQKETE).

This sequence belongs to the G-protein coupled receptor 1 family.

It is found in the cell membrane. Functionally, orphan olfactory receptor specific for trace amines. Trace amine compounds are enriched in animal body fluids and act on trace amine-associated receptors (TAARs) to elicit both intraspecific and interspecific innate behaviors. Ligand-binding causes a conformation change that triggers signaling via the G(s)-class of G-proteins which activate adenylate cyclase. May also be required to provide olfactory input into limbic brain areas to regulate emotional behaviors likely via modulation of the dopamine system. In Rattus norvegicus (Rat), this protein is Trace amine-associated receptor 2 (Taar2).